Here is a 200-residue protein sequence, read N- to C-terminus: Peroxiredoxin (200 aa).

Positions 6–166 (ARIGHLAPGF…ILRLVQAFQF (161 aa)) constitute a Thioredoxin domain. C52 (cysteine sulfenic acid (-SOH) intermediate) is an active-site residue.

It belongs to the peroxiredoxin family. AhpC/Prx1 subfamily. As to quaternary structure, homodimer; disulfide-linked, upon oxidation.

It catalyses the reaction a hydroperoxide + [thioredoxin]-dithiol = an alcohol + [thioredoxin]-disulfide + H2O. In terms of biological role, thiol-specific peroxidase that catalyzes the reduction of hydrogen peroxide and organic hydroperoxides to water and alcohols, respectively. Plays a role in cell protection against oxidative stress by detoxifying peroxides and as sensor of hydrogen peroxide-mediated signaling events. The chain is Peroxiredoxin from Oncorhynchus mykiss (Rainbow trout).